The following is a 156-amino-acid chain: Small ribosomal subunit protein uS7 (156 aa).

This sequence belongs to the universal ribosomal protein uS7 family. Part of the 30S ribosomal subunit. Contacts proteins S9 and S11.

Functionally, one of the primary rRNA binding proteins, it binds directly to 16S rRNA where it nucleates assembly of the head domain of the 30S subunit. Is located at the subunit interface close to the decoding center, probably blocks exit of the E-site tRNA. This Maricaulis maris (strain MCS10) (Caulobacter maris) protein is Small ribosomal subunit protein uS7.